A 71-amino-acid polypeptide reads, in one-letter code: Large ribosomal subunit protein uL30 (71 aa).

The protein belongs to the universal ribosomal protein uL30 family. As to quaternary structure, part of the 50S ribosomal subunit.

The chain is Large ribosomal subunit protein uL30 from Mycobacterium leprae (strain TN).